A 939-amino-acid chain; its full sequence is Valine--tRNA ligase (939 aa).

Residues 47 to 57 (PNVTGILHMGH) carry the 'HIGH' region motif. Residues 563 to 567 (KLSKS) carry the 'KMSKS' region motif. Lys566 lines the ATP pocket. A coiled-coil region spans residues 874–939 (EHLAKERVRL…QSILDKLASL (66 aa)).

This sequence belongs to the class-I aminoacyl-tRNA synthetase family. ValS type 1 subfamily. As to quaternary structure, monomer.

The protein resides in the cytoplasm. It carries out the reaction tRNA(Val) + L-valine + ATP = L-valyl-tRNA(Val) + AMP + diphosphate. Functionally, catalyzes the attachment of valine to tRNA(Val). As ValRS can inadvertently accommodate and process structurally similar amino acids such as threonine, to avoid such errors, it has a 'posttransfer' editing activity that hydrolyzes mischarged Thr-tRNA(Val) in a tRNA-dependent manner. The sequence is that of Valine--tRNA ligase from Chlamydia trachomatis serovar A (strain ATCC VR-571B / DSM 19440 / HAR-13).